The chain runs to 829 residues: Isethionate sulfite-lyase (829 aa).

The 669-residue stretch at 31 to 699 (ERVFNILDSF…VVSATPNGRL (669 aa)) folds into the PFL domain. Residues R188, Q192, 467 to 469 (CTE), and R677 each bind 2-hydroxyethane-1-sulfonate. The active-site Cysteine radical intermediate is the C467. The active-site Proton acceptor is the E469. The region spanning 706 to 829 (DGSSASHGAD…LIARTQHDAM (124 aa)) is the Glycine radical domain. A Glycine radical modification is found at G804.

It belongs to the glycyl radical enzyme (GRE) family. As to quaternary structure, homodimer. Requires the activating protein IslB to generate the key active site glycyl radical on Gly-804 that is involved in catalysis.

It carries out the reaction 2-hydroxyethane-1-sulfonate = acetaldehyde + sulfite + H(+). It participates in organosulfur degradation; alkanesulfonate degradation. In terms of biological role, involved in an anaerobic respiration pathway that converts the sulfonate isethionate (2-hydroxyethanesulfonate) to ammonia, acetate and sulfide. Catalyzes the radical-mediated C-S bond cleavage of isethionate (2-hydroxyethanesulfonate) to form sulfite and acetaldehyde. This Oleidesulfovibrio alaskensis (strain ATCC BAA-1058 / DSM 17464 / G20) (Desulfovibrio alaskensis) protein is Isethionate sulfite-lyase.